Consider the following 348-residue polypeptide: MSDRLTLLRPDDWHIHLRDGAALANTVGDAARTFGRAIVMPNLVPPVRNAAEADAYRQRILAARPAASRFEPLMVLYLTDRTSAEEIRTAKASGFVHAAKLYPAGATTNSDSGVTRIDNVFAALEAMAEVGMPLLVHGEVTRAEVDVFDREKQFIDEHLRRVVERFPTLKVVFEHITTGDAAQFVREAPANVGATITAHHLLYNRNHMLVGGIRPHFYCLPILKRNTHQEALLDAAVSGNPKFFLGTDSAPHARHAKEAACGCAGCYTAYAAIELYAEAFEQRNALDKLEGFASLHGPDFYGLPRNTDRITLVREQWQAPASLPFGDFDVVPLRAGETLRWKLLEAEA.

The Zn(2+) site is built by His-14 and His-16. Substrate contacts are provided by residues 16–18 (HLR) and Asn-42. The Zn(2+) site is built by Lys-100, His-137, and His-175. An N6-carboxylysine modification is found at Lys-100. Residue His-137 participates in substrate binding. Leu-220 is a substrate binding site. A Zn(2+)-binding site is contributed by Asp-248. Asp-248 is a catalytic residue. The substrate site is built by His-252 and Ala-264.

This sequence belongs to the metallo-dependent hydrolases superfamily. DHOase family. Class II DHOase subfamily. Homodimer. It depends on Zn(2+) as a cofactor.

The catalysed reaction is (S)-dihydroorotate + H2O = N-carbamoyl-L-aspartate + H(+). Its pathway is pyrimidine metabolism; UMP biosynthesis via de novo pathway; (S)-dihydroorotate from bicarbonate: step 3/3. Catalyzes the reversible cyclization of carbamoyl aspartate to dihydroorotate. The chain is Dihydroorotase from Pseudomonas paraeruginosa (strain DSM 24068 / PA7) (Pseudomonas aeruginosa (strain PA7)).